A 360-amino-acid polypeptide reads, in one-letter code: Methyltransferase pvhD (360 aa).

Residues 201 to 202 (SG), aspartate 227, 251 to 252 (DL), arginine 267, and arginine 268 contribute to the S-adenosyl-L-methionine site.

It belongs to the class I-like SAM-binding methyltransferase superfamily. Cation-independent O-methyltransferase family.

The protein operates within secondary metabolite biosynthesis. Its function is as follows. Methyltransferase; part of the gene cluster that mediates the biosynthesis of varicidin A, an antifungal natural product containing a cis-octahydrodecalin core. The PKS module of pvhA together with the enoylreductase pvhC catalyze the formation of the polyketide unit which is then conjugated to L-isoleucine by the condensation domain of the NRPS module. Activity of the Dieckmann cyclase domain (RED) of pvhA results in release of an acyclic tetramate. The cytochrome P450 monooxygenase pvhE then catalyzes the oxidation of the C21 methyl group to a to carboxylate group. The methyltransferase pvhD then further methylates the pvhE product. The Diels-Alderase pvhB is able to catalyze Diels-Alder cycloaddition using both pvhE and pvhD products as substrates to form the decalin ring, yielding varicidin B and A, respectively. The sequence is that of Methyltransferase pvhD from Talaromyces variabilis (Penicillium variabile).